The primary structure comprises 242 residues: Zinc import ATP-binding protein ZnuC (242 aa).

The 218-residue stretch at 24 to 241 (INVENLSFFY…EKFLKMFSSY (218 aa)) folds into the ABC transporter domain. Residue 56-63 (GPNGGGKT) coordinates ATP.

This sequence belongs to the ABC transporter superfamily. Zinc importer (TC 3.A.1.15.5) family. In terms of assembly, the complex is composed of two ATP-binding proteins (ZnuC), two transmembrane proteins (ZnuB) and a solute-binding protein (ZnuA).

The protein resides in the cell inner membrane. It catalyses the reaction Zn(2+)(out) + ATP(in) + H2O(in) = Zn(2+)(in) + ADP(in) + phosphate(in) + H(+)(in). Part of the ABC transporter complex ZnuABC involved in zinc import. Responsible for energy coupling to the transport system. The protein is Zinc import ATP-binding protein ZnuC of Ehrlichia chaffeensis (strain ATCC CRL-10679 / Arkansas).